We begin with the raw amino-acid sequence, 628 residues long: MDSKEVSEVPRREVRSFLMARDPSIDRRFRPRPNKKMRLFDNIQESEEESFSEYSDTESEYKYQSSEATEGASCATSAADSSNVETGPQVFLRLRPVKDASKAYIVSEEANVLITSCKVDSTSNNVNRMEKHFGFTSIFDSTVGQRDIYDTCVGPKIMEEECVTIMTYGTSGSGKTYTLLGDDVRAGIIPRALENIFTIYQDTVFRSPKLKLINGSIVFLQDDASLKELQIRKKLLDLCPDISAHHQRLKQVIDGDHMFETKASTDVSVLVWVSFVEIYNELVYDLLAIPPKQDKLGEVPRKNLKIVGNKGHVFIKGLTSVFVTSSEEALRLLRLGQQRSTYASTSVNANSSRSHCVFTVDILKYNRSGITTQSSYKFCDLAGSERVNNTGTSGLRLKEAKNINTSLMVLGRCLDAASTVQKKKNADIIPYRDSKLTMLLQAALLGKEKLAMIVTVTPLDKYYEENLNVLNFASIAKNIIFKEPVIKQHRVSYCGFMEFSKMSTCEGGDYTKELEDENVRLQLEIEQLKYDHVLQMQLLEEKLRRELTATYQEIIQNNKKQYEDECEKKLLIAQRESEFMLSSQRRRYEEQIEDLKDEIEELKNPASDTDISDDPNESKSPIEILDDD.

Positions 28 to 68 are disordered; the sequence is RFRPRPNKKMRLFDNIQESEEESFSEYSDTESEYKYQSSEA. A compositionally biased stretch (acidic residues) spans 44–58; it reads QESEEESFSEYSDTE. A Kinesin motor domain is found at 87–479; that stretch reads GPQVFLRLRP…LNFASIAKNI (393 aa). 169-176 provides a ligand contact to ATP; it reads GTSGSGKT. The stretch at 509-612 forms a coiled coil; sequence DYTKELEDEN…KNPASDTDIS (104 aa). Residues 596–628 form a disordered region; the sequence is KDEIEELKNPASDTDISDDPNESKSPIEILDDD. Residue serine 607 is modified to Phosphoserine. Threonine 609 is subject to Phosphothreonine. Phosphoserine is present on serine 612.

Belongs to the TRAFAC class myosin-kinesin ATPase superfamily. Kinesin family.

It localises to the cytoplasm. The protein localises to the cytoskeleton. In terms of biological role, required during female meiosis for bipolar spindle formation in the absence of the centrosomes and chromosome homolog segregation. Also has roles in male meiosis and mitotic divisions of the early embryo. In Drosophila melanogaster (Fruit fly), this protein is Kinesin-like protein subito (sub).